Reading from the N-terminus, the 312-residue chain is Elongation factor Ts (312 aa).

The tract at residues 84–87 (TDFV) is involved in Mg(2+) ion dislocation from EF-Tu.

The protein belongs to the EF-Ts family.

It localises to the cytoplasm. Its function is as follows. Associates with the EF-Tu.GDP complex and induces the exchange of GDP to GTP. It remains bound to the aminoacyl-tRNA.EF-Tu.GTP complex up to the GTP hydrolysis stage on the ribosome. The chain is Elongation factor Ts from Caulobacter vibrioides (strain ATCC 19089 / CIP 103742 / CB 15) (Caulobacter crescentus).